Consider the following 426-residue polypeptide: Cytochrome c biogenesis protein Ccs1 (426 aa).

Helical transmembrane passes span 11–31 (LKFA…GSII), 70–90 (NFWF…CTFF), and 153–173 (IAPV…IFAS).

This sequence belongs to the Ccs1/CcsB family. In terms of assembly, may interact with CcsA.

It is found in the plastid. It localises to the chloroplast thylakoid membrane. Functionally, required during biogenesis of c-type cytochromes (cytochrome c6 and cytochrome f) at the step of heme attachment. In Heterosigma akashiwo (strain CCMP452 / OLISTH), this protein is Cytochrome c biogenesis protein Ccs1.